Here is a 134-residue protein sequence, read N- to C-terminus: Mini-ribonuclease 3 (134 aa).

Asp23 is a catalytic residue.

It belongs to the MrnC RNase family. As to quaternary structure, homodimer. Requires Mg(2+) as cofactor.

The protein resides in the cytoplasm. Involved in correct processing of both the 5' and 3' ends of 23S rRNA precursor. Processes 30S rRNA precursor transcript even in absence of ribonuclease 3 (Rnc); Rnc processes 30S rRNA into smaller rRNA precursors. This Brevibacillus brevis (strain 47 / JCM 6285 / NBRC 100599) protein is Mini-ribonuclease 3.